A 690-amino-acid chain; its full sequence is Proprotein convertase subtilisin/kexin type 9 (690 aa).

Residues 1 to 28 (MGTVSSRRLWWPLPLLLLLLLGPTGTRA) form the signal peptide. Residues 29–150 (QEEDDDDYEE…IEEDSSVFAQ (122 aa)) constitute a propeptide that is removed on maturation. Sulfotyrosine is present on Y36. Phosphoserine is present on S45. The Inhibitor I9 domain maps to 75-147 (TYVVVLKEET…VDYIEEDSSV (73 aa)). The Peptidase S8 domain occupies 153–459 (PWNLERITPA…GWQLFCRTVW (307 aa)). Residues D184 and H224 each act as charge relay system in the active site. 2 disulfides stabilise this stretch: C221–C253 and C321–C356. S384 functions as the Charge relay system in the catalytic mechanism. Residues 448–690 (GAGWQLFCRT…HLAQASQELQ (243 aa)) form a C-terminal domain region. 3 disulfide bridges follow: C455-C525, C475-C524, and C484-C507. N531 is a glycosylation site (N-linked (GlcNAc...) asparagine). 6 disulfides stabilise this stretch: C532/C599, C550/C598, C560/C586, C606/C677, C624/C676, and C633/C652. Phosphoserine is present on S686.

This sequence belongs to the peptidase S8 family. Monomer. Can self-associate to form dimers and higher multimers which may have increased LDLR degrading activity. The precursor protein but not the mature protein may form multimers. Interacts with APOB, VLDLR, LRP8/APOER2 and BACE1. The full-length immature form (pro-PCSK9) interacts with SCNN1A, SCNN1B and SCNN1G. The pro-PCSK9 form (via C-terminal domain) interacts with LDLR. Interacts (via the C-terminal domain) with ANXA2 (via repeat Annexin 1); the interaction inhibits the degradation of LDLR. The cofactor is Ca(2+). Post-translationally, cleavage by furin and PCSK5 generates a truncated inactive protein that is unable to induce LDLR degradation. Undergoes autocatalytic cleavage in the endoplasmic reticulum to release the propeptide from the N-terminus and the cleavage of the propeptide is strictly required for its maturation and activation. The cleaved propeptide however remains associated with the catalytic domain through non-covalent interactions, preventing potential substrates from accessing its active site. As a result, it is secreted from cells as a propeptide-containing, enzymatically inactive protein. In terms of processing, phosphorylation protects the propeptide against proteolysis.

It localises to the cytoplasm. The protein localises to the secreted. Its subcellular location is the endosome. It is found in the lysosome. The protein resides in the cell surface. It localises to the endoplasmic reticulum. The protein localises to the golgi apparatus. Its proteolytic activity is autoinhibited by the non-covalent binding of the propeptide to the catalytic domain. Inhibited by EGTA. Crucial player in the regulation of plasma cholesterol homeostasis. Binds to low-density lipid receptor family members: low density lipoprotein receptor (LDLR), very low density lipoprotein receptor (VLDLR), apolipoprotein E receptor (LRP1/APOER) and apolipoprotein receptor 2 (LRP8/APOER2), and promotes their degradation in intracellular acidic compartments. Acts via a non-proteolytic mechanism to enhance the degradation of the hepatic LDLR through a clathrin LDLRAP1/ARH-mediated pathway. May prevent the recycling of LDLR from endosomes to the cell surface or direct it to lysosomes for degradation. Can induce ubiquitination of LDLR leading to its subsequent degradation. Inhibits intracellular degradation of APOB via the autophagosome/lysosome pathway in a LDLR-independent manner. Involved in the disposal of non-acetylated intermediates of BACE1 in the early secretory pathway. Inhibits epithelial Na(+) channel (ENaC)-mediated Na(+) absorption by reducing ENaC surface expression primarily by increasing its proteasomal degradation. Regulates neuronal apoptosis via modulation of LRP8/APOER2 levels and related anti-apoptotic signaling pathways. This is Proprotein convertase subtilisin/kexin type 9 (PCSK9) from Callithrix jacchus (White-tufted-ear marmoset).